Consider the following 313-residue polypeptide: Ketimine reductase mu-crystallin (313 aa).

Arg47 contacts 3,3',5-triiodo-L-thyronine. Positions 90, 91, 118, 143, 145, 146, 167, 168, 169, 172, 204, 205, and 225 each coordinate NADPH. Residue Glu256 coordinates 3,3',5-triiodo-L-thyronine. Ser291 serves as a coordination point for NADPH.

The protein belongs to the ornithine cyclodeaminase/mu-crystallin family. In terms of assembly, homodimer. Binds the thyroid hormone triiodothyronine (T3); T3 binding inhibits enzymatic activity.

Its subcellular location is the cytoplasm. It carries out the reaction L-pipecolate + NADP(+) = Delta(1)-piperideine-2-carboxylate + NADPH + H(+). It catalyses the reaction L-pipecolate + NAD(+) = Delta(1)-piperideine-2-carboxylate + NADH + H(+). The catalysed reaction is L-proline + NADP(+) = 1-pyrroline-2-carboxylate + NADPH + H(+). The enzyme catalyses L-proline + NAD(+) = 1-pyrroline-2-carboxylate + NADH + H(+). It carries out the reaction (3R)-1,4-thiomorpholine-3-carboxylate + NAD(+) = 3,4-dehydrothiomorpholine-3-carboxylate + NADH + 2 H(+). It catalyses the reaction (3R)-1,4-thiomorpholine-3-carboxylate + NADP(+) = 3,4-dehydrothiomorpholine-3-carboxylate + NADPH + 2 H(+). The catalysed reaction is (S)-cystathionine ketimine + NADH + 2 H(+) = (3R,5S)-2,3,5,6,7-pentahydro-1,4-thiazepine-3,5-dicarboxylate + NAD(+). The enzyme catalyses (S)-cystathionine ketimine + NADPH + 2 H(+) = (3R,5S)-2,3,5,6,7-pentahydro-1,4-thiazepine-3,5-dicarboxylate + NADP(+). It carries out the reaction (R)-lanthionine ketimine + NADPH + 2 H(+) = (3R,5R)-1,4-thiomorpholine-3,5-dicarboxylate + NADP(+). It catalyses the reaction Delta(2)-thiazoline-2-carboxylate + NADPH + 2 H(+) = L-thiazolidine-2-carboxylate + NADP(+). In terms of biological role, catalyzes the NAD(P)H-dependent reduction of imine double bonds of a number of cyclic ketimine substrates, including sulfur-containing cyclic ketimines. Under physiological conditions, it efficiently catalyzes delta(1)-piperideine-2-carboxylate (P2C) and delta(1)-pyrroline-2-carboxylate (Pyr2C) reduction, suggesting a central role in lysine and glutamate metabolism. Additional substrates are delta(2)-thiazoline-2-carboxylate (T2C), 3,4-dehydrothiomorpholine-3-carboxylate (AECK), and (R)-lanthionine ketimine (LK) that is reduced at very low rate compared to other substrates. Also catalyzes the NAD(P)H-dependent reduction of (S)-cystathionine ketimine (CysK). The protein is Ketimine reductase mu-crystallin of Rattus norvegicus (Rat).